We begin with the raw amino-acid sequence, 1137 residues long: MSNNINANNLNTDSSSSPVNVPKMDALIIPVTMEVPCDSRGQRMWWAFLASSMVTFFGGLFIILLWRTLKYLWTVCCHCGVKNKEAQKINGGGDTQADGACKPTDEKEENVAAEVGWMTSVKDWAGVMISAQTLTGRVLVVLVFALSIGALVIYFIDSSNPIESCQNFYKDFTLQIDMAFNVFFLLYFGLRFIAANDKLWFWLEVNSVVDFFTVPPVFVSVYLNRSWLGLRFLRALRLIQFSEILQFLNILKTSNSIKLVNLCSIFISTWLTAAGFIHLVENSGDPWENFQNNQQLTYWECVYLLMVTMSTVGYGDVYAKTTLGRLFMVFFILGGLAMFASYVPEIIELIGNRKKYGGSYSAVSGRKHIVVCGHITLESVSNFLKDFLHKDRDDVNVEIVFLHNISPNLELEALFKRHFTQVEFYQGSVLNPHDLARVKIESADACLILANKYCADPDAEDASNIMRVISIKNYHPKIRIITQMLQYHNKAHLLNIPSWNWKEGDDAICLAELKLGFIAQSCLAPGLSTMLANLFSMRSFIKIEEDTWQKYYLEGVANEMYTEYLSSAFVGLSFPAVCELVFAKLKLLMIAIEYKSEKRESSILINPGNHVKIQEGTLGFFIASDAKEVKRAFFYCKACHDDITDPKRIKKCGCKRLEDEQPSTLSPKKKQRNGGMRNSPNSSPKLMRHDPLLIPGNEQIDNMDANVKKYDSTGMFHWCPAKDIEKVILTRSEAAMTVLSGHVVVCIFGDVKSALIGLRNLVMPLRASNFHYHELKHIVFVGSLEYLRREWETLHNFPKVSILPGTPLSRADLRAVNINLCDMCVILSANQNNIDDASLQDKECILASLNIKSMQFDDSIGVLQANSQGFTPPGMDRSSPDNSPVHGLLRQPSITTGANIPIITELVNDSNVQFLDQDDDDDPDTELYLTQPFACGTAFAVSVLDSLMSATYFNDNILTLIRTLVTGGATPELEALIAEENALRGGYSTPQTLANRDRCRVAQLALYDGPFADLGDGGCYGDLFCKALKTYNMLCFGIYRLRDAHLSTPSQCTKRYVITNPPYEFELVPTDLIFCLMQFDHNAGQSRASLSHSSHSSYSSSKKSSSVHSIPSTANRPNRTKTRDSREKQKYVQEDRL.

Residues 1 to 44 (MSNNINANNLNTDSSSSPVNVPKMDALIIPVTMEVPCDSRGQRM) lie on the Extracellular side of the membrane. The chain crosses the membrane as a helical span at residues 45 to 65 (WWAFLASSMVTFFGGLFIILL). Topologically, residues 66–137 (WRTLKYLWTV…MISAQTLTGR (72 aa)) are cytoplasmic. Residues 138–158 (VLVVLVFALSIGALVIYFIDS) traverse the membrane as a helical segment. The Extracellular portion of the chain corresponds to 159–173 (SNPIESCQNFYKDFT). Residues 174–194 (LQIDMAFNVFFLLYFGLRFIA) form a helical membrane-spanning segment. Residues 195–198 (ANDK) are Cytoplasmic-facing. A helical membrane pass occupies residues 199–219 (LWFWLEVNSVVDFFTVPPVFV). The Extracellular segment spans residues 220 to 223 (SVYL). Residues 224-244 (NRSWLGLRFLRALRLIQFSEI) traverse the membrane as a helical; Voltage-sensor segment. The Cytoplasmic segment spans residues 245–259 (LQFLNILKTSNSIKL). Residues 260-280 (VNLCSIFISTWLTAAGFIHLV) form a helical membrane-spanning segment. Topologically, residues 281 to 294 (ENSGDPWENFQNNQ) are extracellular. The segment at residues 295–317 (QLTYWECVYLLMVTMSTVGYGDV) is an intramembrane region (pore-forming). A Selectivity for potassium motif is present at residues 311 to 314 (TVGY). Residues 318-326 (YAKTTLGRL) lie on the Extracellular side of the membrane. A helical transmembrane segment spans residues 327–347 (FMVFFILGGLAMFASYVPEII). At 348-1137 (ELIGNRKKYG…KQKYVQEDRL (790 aa)) the chain is on the cytoplasmic side. One can recognise an RCK N-terminal 1 domain in the interval 366 to 508 (RKHIVVCGHI…WNWKEGDDAI (143 aa)). The Mg(2+) site is built by Glu-398, Gln-421, and Glu-423. The segment at 515–535 (LGFIAQSCLAPGLSTMLANLF) is segment S7. A segment S8 region spans residues 572-592 (LSFPAVCELVFAKLKLLMIAI). The segment at 636–640 (CKACH) is heme-binding motif. The tract at residues 660 to 688 (EQPSTLSPKKKQRNGGMRNSPNSSPKLMR) is disordered. Residues 738 to 758 (VLSGHVVVCIFGDVKSALIGL) are segment S9. Residues 740 to 884 (SGHVVVCIFG…MDRSSPDNSP (145 aa)) enclose the RCK N-terminal 2 domain. Residues 904–926 (TELVNDSNVQFLDQDDDDDPDTE) carry the Calcium bowl motif. Gln-913, Asp-916, Asp-919, and Asp-921 together coordinate Ca(2+). The segment S10 stretch occupies residues 933 to 953 (FACGTAFAVSVLDSLMSATYF). Residues 1088 to 1112 (ASLSHSSHSSYSSSKKSSSVHSIPS) are compositionally biased toward low complexity. The segment at 1088 to 1137 (ASLSHSSHSSYSSSKKSSSVHSIPSTANRPNRTKTRDSREKQKYVQEDRL) is disordered. Basic and acidic residues predominate over residues 1121–1137 (KTRDSREKQKYVQEDRL).

Belongs to the potassium channel family. Calcium-activated (TC 1.A.1.3) subfamily. KCa1.1/KCNMA1 sub-subfamily. In terms of assembly, homotetramer; which constitutes the calcium-activated potassium channel.

The protein localises to the cell membrane. The enzyme catalyses K(+)(in) = K(+)(out). With respect to regulation, ethanol and carbon monoxide-bound heme increase channel activation. Heme inhibits channel activation. Its function is as follows. Potassium channel activated by both membrane depolarization or increase in cytosolic Ca(2+) that mediates export of K(+). It is also activated by the concentration of cytosolic Mg(2+). Its activation dampens the excitatory events that elevate the cytosolic Ca(2+) concentration and/or depolarize the cell membrane. It therefore contributes to repolarization of the membrane potential. Plays a key role in controlling excitability in a number of systems, such as regulation of the contraction of smooth muscle, the tuning of hair cells in the cochlea, regulation of transmitter release, and innate immunity. In smooth muscles, its activation by high level of Ca(2+), caused by ryanodine receptors in the sarcoplasmic reticulum, regulates the membrane potential. In cochlea cells, its number and kinetic properties partly determine the characteristic frequency of each hair cell and thereby helps to establish a tonotopic map. Highly sensitive to both iberiotoxin (IbTx) and charybdotoxin (CTX). The polypeptide is Calcium-activated potassium channel subunit alpha-1 (KCNMA1) (Gallus gallus (Chicken)).